Here is a 350-residue protein sequence, read N- to C-terminus: Protein pelota homolog (350 aa).

This sequence belongs to the eukaryotic release factor 1 family. Pelota subfamily. As to quaternary structure, monomer. Requires a divalent metal cation as cofactor.

The protein resides in the cytoplasm. In terms of biological role, may function in recognizing stalled ribosomes, interact with stem-loop structures in stalled mRNA molecules, and effect endonucleolytic cleavage of the mRNA. May play a role in the release non-functional ribosomes and degradation of damaged mRNAs. Has endoribonuclease activity. The chain is Protein pelota homolog from Methanosarcina acetivorans (strain ATCC 35395 / DSM 2834 / JCM 12185 / C2A).